A 163-amino-acid polypeptide reads, in one-letter code: 2-C-methyl-D-erythritol 2,4-cyclodiphosphate synthase (163 aa).

Positions 12 and 14 each coordinate a divalent metal cation. 4-CDP-2-C-methyl-D-erythritol 2-phosphate is bound by residues Asp12–His14 and His38–Ser39. An a divalent metal cation-binding site is contributed by His46. Residues Asp60–Gly62, Phe65–Asp69, Thr136–Glu139, Phe143, and Arg146 each bind 4-CDP-2-C-methyl-D-erythritol 2-phosphate.

This sequence belongs to the IspF family. In terms of assembly, homotrimer. It depends on a divalent metal cation as a cofactor.

It catalyses the reaction 4-CDP-2-C-methyl-D-erythritol 2-phosphate = 2-C-methyl-D-erythritol 2,4-cyclic diphosphate + CMP. It functions in the pathway isoprenoid biosynthesis; isopentenyl diphosphate biosynthesis via DXP pathway; isopentenyl diphosphate from 1-deoxy-D-xylulose 5-phosphate: step 4/6. Involved in the biosynthesis of isopentenyl diphosphate (IPP) and dimethylallyl diphosphate (DMAPP), two major building blocks of isoprenoid compounds. Catalyzes the conversion of 4-diphosphocytidyl-2-C-methyl-D-erythritol 2-phosphate (CDP-ME2P) to 2-C-methyl-D-erythritol 2,4-cyclodiphosphate (ME-CPP) with a corresponding release of cytidine 5-monophosphate (CMP). The polypeptide is 2-C-methyl-D-erythritol 2,4-cyclodiphosphate synthase (Acinetobacter baylyi (strain ATCC 33305 / BD413 / ADP1)).